A 235-amino-acid polypeptide reads, in one-letter code: Large ribosomal subunit protein uL3 (235 aa).

The tract at residues 150–189 (AGGPASHGSGHHRHAGSTGMRSTPGRGLPGGKKAGQMGNE) is disordered.

Belongs to the universal ribosomal protein uL3 family. In terms of assembly, part of the 50S ribosomal subunit. Forms a cluster with proteins L14 and L19.

One of the primary rRNA binding proteins, it binds directly near the 3'-end of the 23S rRNA, where it nucleates assembly of the 50S subunit. The sequence is that of Large ribosomal subunit protein uL3 from Protochlamydia amoebophila (strain UWE25).